The primary structure comprises 110 residues: Holo-[acyl-carrier-protein] synthase (110 aa).

Positions 8 and 54 each coordinate Mg(2+).

This sequence belongs to the P-Pant transferase superfamily. AcpS family. The cofactor is Mg(2+).

It is found in the cytoplasm. The catalysed reaction is apo-[ACP] + CoA = holo-[ACP] + adenosine 3',5'-bisphosphate + H(+). In terms of biological role, transfers the 4'-phosphopantetheine moiety from coenzyme A to a Ser of acyl-carrier-protein. In Mycoplasma capricolum subsp. capricolum (strain California kid / ATCC 27343 / NCTC 10154), this protein is Holo-[acyl-carrier-protein] synthase.